Here is a 243-residue protein sequence, read N- to C-terminus: Proteasome subunit beta (243 aa).

A compositionally biased stretch (polar residues) spans 1-16 (MRAPQHNSDFSRTVNQ). The interval 1–29 (MRAPQHNSDFSRTVNQLADDPNPYEPEVG) is disordered. Residues 1–48 (MRAPQHNSDFSRTVNQLADDPNPYEPEVGSMPKNEFSRADLDNVNKTG) constitute a propeptide, removed in mature form; by autocatalysis. The Nucleophile role is filled by threonine 49.

This sequence belongs to the peptidase T1B family. As to quaternary structure, the 20S proteasome core is composed of 14 alpha and 14 beta subunits that assemble into four stacked heptameric rings, resulting in a barrel-shaped structure. The two inner rings, each composed of seven catalytic beta subunits, are sandwiched by two outer rings, each composed of seven alpha subunits. The catalytic chamber with the active sites is on the inside of the barrel. Has a gated structure, the ends of the cylinder being occluded by the N-termini of the alpha-subunits. Is capped at one or both ends by the proteasome regulatory ATPase, PAN.

It localises to the cytoplasm. It carries out the reaction Cleavage of peptide bonds with very broad specificity.. Its activity is regulated as follows. The formation of the proteasomal ATPase PAN-20S proteasome complex, via the docking of the C-termini of PAN into the intersubunit pockets in the alpha-rings, triggers opening of the gate for substrate entry. Interconversion between the open-gate and close-gate conformations leads to a dynamic regulation of the 20S proteasome proteolysis activity. In terms of biological role, component of the proteasome core, a large protease complex with broad specificity involved in protein degradation. This chain is Proteasome subunit beta, found in Natrialba magadii (strain ATCC 43099 / DSM 3394 / CCM 3739 / CIP 104546 / IAM 13178 / JCM 8861 / NBRC 102185 / NCIMB 2190 / MS3) (Natronobacterium magadii).